Reading from the N-terminus, the 149-residue chain is Transcriptional repressor NrdR (149 aa).

Residues 3 to 34 (CPFCGANDTKVIDSRLVADGHQVRRRRQCLAC) fold into a zinc finger. The 91-residue stretch at 49–139 (PRVIKTDGNR…VYRSFEDIRE (91 aa)) folds into the ATP-cone domain.

It belongs to the NrdR family. It depends on Zn(2+) as a cofactor.

Functionally, negatively regulates transcription of bacterial ribonucleotide reductase nrd genes and operons by binding to NrdR-boxes. In Photobacterium profundum (strain SS9), this protein is Transcriptional repressor NrdR.